A 281-amino-acid chain; its full sequence is MRSLVVFFALAVLTGCQARSLFQADAPQPRWEEMVDRFWQYVSELNTQTDGMVQNIKGSQLSRELDTLITDTMAELSSYSENLQTQMTPYASDAAGQLSKDLQLLAGKLQTDMTDAKERSTQYLQELKTMMEQNADDVKNRVGTYTRKLKKRLNKDTEEIRNTVATYMSEMQSRASQNADAVKDRFQPYMSQAQDGATQKLGAISELMKAQAQEVSEQLEVQAGALKEKLEETAENLRTSLEGRVDELTSLLAPYSQKIREQLQEVMDKIKEATAALPTQA.

The N-terminal stretch at Met1–Ala18 is a signal peptide. Residues Arg19 to Ala24 constitute a propeptide that is removed on maturation. The tract at residues Met34–Asp66 is 3 X approximate tandem repeats. Tandem repeats lie at residues Thr67 to Thr88, Pro89 to Gln110, Thr111 to Glu132, Gln133 to Asn154, Lys155 to Ser176, Gln177 to Gln199, Lys200 to Lys227, Glu228 to Thr249, and Pro254 to Ala281. Positions Thr67–Ala281 are 9 X 22 AA approximate tandem repeats.

The protein belongs to the apolipoprotein A1/A4/E family. As to quaternary structure, homotetramer.

Its subcellular location is the secreted. The protein resides in the extracellular space. It is found in the extracellular matrix. Functionally, APOE is an apolipoprotein, a protein associating with lipid particles, that mainly functions in lipoprotein-mediated lipid transport between organs via the plasma and interstitial fluids. APOE is a core component of plasma lipoproteins and is involved in their production, conversion and clearance. Apolipoproteins are amphipathic molecules that interact both with lipids of the lipoprotein particle core and the aqueous environment of the plasma. The protein is Apolipoprotein Eb (apoeb) of Danio rerio (Zebrafish).